The chain runs to 357 residues: DNA replication and repair protein RecF (357 aa).

Residue 30 to 37 (GANGSGKT) participates in ATP binding.

It belongs to the RecF family.

It is found in the cytoplasm. Functionally, the RecF protein is involved in DNA metabolism; it is required for DNA replication and normal SOS inducibility. RecF binds preferentially to single-stranded, linear DNA. It also seems to bind ATP. The sequence is that of DNA replication and repair protein RecF from Shigella flexneri serotype 5b (strain 8401).